A 225-amino-acid polypeptide reads, in one-letter code: UPF0173 metal-dependent hydrolase Pisl_0803 (225 aa).

This sequence belongs to the UPF0173 family.

The chain is UPF0173 metal-dependent hydrolase Pisl_0803 from Pyrobaculum islandicum (strain DSM 4184 / JCM 9189 / GEO3).